The chain runs to 433 residues: Histidinol dehydrogenase (433 aa).

3 residues coordinate NAD(+): Tyr133, Gln194, and Asn217. Residues Ser240, Gln262, and His265 each contribute to the substrate site. Positions 262 and 265 each coordinate Zn(2+). Residues Glu330 and His331 each act as proton acceptor in the active site. 4 residues coordinate substrate: His331, Asp364, Glu418, and His423. Asp364 is a binding site for Zn(2+). A Zn(2+)-binding site is contributed by His423.

The protein belongs to the histidinol dehydrogenase family. Zn(2+) is required as a cofactor.

It carries out the reaction L-histidinol + 2 NAD(+) + H2O = L-histidine + 2 NADH + 3 H(+). The protein operates within amino-acid biosynthesis; L-histidine biosynthesis; L-histidine from 5-phospho-alpha-D-ribose 1-diphosphate: step 9/9. Functionally, catalyzes the sequential NAD-dependent oxidations of L-histidinol to L-histidinaldehyde and then to L-histidine. The sequence is that of Histidinol dehydrogenase from Dechloromonas aromatica (strain RCB).